The following is a 422-amino-acid chain: N-acylglucosamine 2-epimerase (422 aa).

The tract at residues 185–206 (LLNLVEQLGEADEELAGISAEL) is leucine-zipper.

It belongs to the N-acylglucosamine 2-epimerase family. In terms of assembly, homodimer. Forms a heterodimer with renin and inhibits its activity.

The catalysed reaction is an N-acyl-D-glucosamine = an N-acyl-D-mannosamine. It participates in amino-sugar metabolism; N-acetylneuraminate degradation. Functionally, catalyzes the interconversion of N-acetylglucosamine to N-acetylmannosamine. Involved in the N-glycolylneuraminic acid (Neu5Gc) degradation pathway. This Bos taurus (Bovine) protein is N-acylglucosamine 2-epimerase (RENBP).